The sequence spans 543 residues: Myotubularin-related protein 9-like (543 aa).

Residues 124-502 (AWHFHPPECY…QSLRLWQGLF (379 aa)) enclose the Myotubularin phosphatase domain.

It belongs to the protein-tyrosine phosphatase family. Non-receptor class myotubularin subfamily.

Probable pseudophosphatase. In Bos taurus (Bovine), this protein is Myotubularin-related protein 9-like.